Consider the following 486-residue polypeptide: Nucleolar GTP-binding protein 2 (486 aa).

The tract at residues 1-20 (MGTGKKEKSRRIREGDTKDG) is disordered. Phosphoserine is present on residues Ser-60, Ser-85, and Ser-155. The CP-type G domain occupies 212 to 373 (WNELYKVIDS…LIDCPGIVPP (162 aa)). Residues 322 to 329 (GYPNTGKS) and 366 to 370 (DCPGI) each bind GTP.

It belongs to the TRAFAC class YlqF/YawG GTPase family. NOG2 subfamily.

The protein localises to the nucleus. It is found in the nucleolus. GTPase that associates with pre-60S ribosomal subunits in the nucleolus and is required for their nuclear export and maturation. This chain is Nucleolar GTP-binding protein 2 (NOG2), found in Saccharomyces cerevisiae (strain ATCC 204508 / S288c) (Baker's yeast).